Reading from the N-terminus, the 142-residue chain is Large ribosomal subunit protein uL11 (142 aa).

The protein belongs to the universal ribosomal protein uL11 family. Part of the ribosomal stalk of the 50S ribosomal subunit. Interacts with L10 and the large rRNA to form the base of the stalk. L10 forms an elongated spine to which L12 dimers bind in a sequential fashion forming a multimeric L10(L12)X complex. One or more lysine residues are methylated.

In terms of biological role, forms part of the ribosomal stalk which helps the ribosome interact with GTP-bound translation factors. The polypeptide is Large ribosomal subunit protein uL11 (Shewanella sp. (strain ANA-3)).